The sequence spans 209 residues: Type III pantothenate kinase (209 aa).

Residue 5-12 participates in ATP binding; it reads DIGNSNAN. Substrate contacts are provided by residues Tyr-68 and 72–75; that span reads GIDR. The active-site Proton acceptor is the Asp-74. Asp-89 lines the K(+) pocket. Ser-92 contributes to the ATP binding site. A substrate-binding site is contributed by Thr-144.

Belongs to the type III pantothenate kinase family. In terms of assembly, homodimer. Requires NH4(+) as cofactor. K(+) is required as a cofactor.

Its subcellular location is the cytoplasm. The enzyme catalyses (R)-pantothenate + ATP = (R)-4'-phosphopantothenate + ADP + H(+). The protein operates within cofactor biosynthesis; coenzyme A biosynthesis; CoA from (R)-pantothenate: step 1/5. Catalyzes the phosphorylation of pantothenate (Pan), the first step in CoA biosynthesis. The chain is Type III pantothenate kinase from Campylobacter jejuni subsp. jejuni serotype O:2 (strain ATCC 700819 / NCTC 11168).